The following is a 428-amino-acid chain: F-box/LRR-repeat protein 3 (428 aa).

Residues methionine 1–serine 21 show a composition bias toward basic and acidic residues. A disordered region spans residues methionine 1–threonine 27. In terms of domain architecture, F-box spans cysteine 34–phenylalanine 81. LRR repeat units lie at residues serine 119–serine 146, aspartate 181–serine 207, cysteine 208–tyrosine 233, histidine 234–valine 259, glycine 316–alanine 341, glycine 343–glutamate 368, and cysteine 369–glutamate 394.

Part of the SCF (SKP1-CUL1-F-box) E3 ubiquitin-protein ligase complex SCF(FBXL3) composed of CUL1, SKP1, RBX1 and FBXL3. Interacts with CRY1 and CRY2 (phosphorylated). Interacts with HDAC3. Interacts with KDM8. Undergoes autophagy-mediated degradation in the liver in a time-dependent manner. In terms of tissue distribution, widely expressed.

Its subcellular location is the nucleus. The protein resides in the cytoplasm. Its pathway is protein modification; protein ubiquitination. Functionally, substrate-recognition component of the SCF(FBXL3) E3 ubiquitin ligase complex involved in circadian rhythm function. Plays a key role in the maintenance of both the speed and the robustness of the circadian clock oscillation. The SCF(FBXL3) complex mainly acts in the nucleus and mediates ubiquitination and subsequent degradation of CRY1 and CRY2. Activity of the SCF(FBXL3) complex is counteracted by the SCF(FBXL21) complex. In Homo sapiens (Human), this protein is F-box/LRR-repeat protein 3 (FBXL3).